A 96-amino-acid polypeptide reads, in one-letter code: UPF0235 protein VV1_1522 (96 aa).

The protein belongs to the UPF0235 family.

The sequence is that of UPF0235 protein VV1_1522 from Vibrio vulnificus (strain CMCP6).